Here is a 621-residue protein sequence, read N- to C-terminus: Putative acyltransferase plsB1 (621 aa).

Residues 123–128 carry the HXXXXD motif motif; sequence HRSYLD.

The protein belongs to the GPAT/DAPAT family.

The protein resides in the cell membrane. This chain is Putative acyltransferase plsB1 (plsB1), found in Mycobacterium bovis (strain ATCC BAA-935 / AF2122/97).